We begin with the raw amino-acid sequence, 224 residues long: MAAQNQSAQKDLEIQVKAPDGKVDGSVVLPAELFDVPANIALMHQVVTAQRAAARQGTHSTKTRGDVSGGGRKPYRQKGTGRARQGSTRTPQFTGGGVVHGPKPRDYSQRTPKKMIAAALRGALSDRARNGRIHAVTELVAGQTPSTKSAKTFLATITDRKQVLVVIGRDDQTGVKSVRNLPGVHILSPDQLNTYDVLRADDVVFSVEALNAYIAANTSEEVSA.

The tract at residues 52-109 is disordered; the sequence is AAARQGTHSTKTRGDVSGGGRKPYRQKGTGRARQGSTRTPQFTGGGVVHGPKPRDYSQ.

It belongs to the universal ribosomal protein uL4 family. As to quaternary structure, part of the 50S ribosomal subunit.

Its function is as follows. One of the primary rRNA binding proteins, this protein initially binds near the 5'-end of the 23S rRNA. It is important during the early stages of 50S assembly. It makes multiple contacts with different domains of the 23S rRNA in the assembled 50S subunit and ribosome. Functionally, forms part of the polypeptide exit tunnel. This chain is Large ribosomal subunit protein uL4, found in Mycobacterium ulcerans (strain Agy99).